The following is a 252-amino-acid chain: Floral homeotic protein AGAMOUS (252 aa).

The MADS-box domain maps to 19–73 (RGKIEIKRIENTTNRQVTFCKRRNGLLKKAYELSVLCDAEVALIVFSSRGRLYEY). One can recognise a K-box domain in the interval 103–193 (AQYYQQESAK…RAKIAENERN (91 aa)).

The protein resides in the nucleus. In terms of biological role, probable transcription factor involved in regulating genes that determines stamen and carpel development in wild-type flowers. In Brassica napus (Rape), this protein is Floral homeotic protein AGAMOUS (AG1).